The chain runs to 577 residues: Laccase-17 (577 aa).

The signal sequence occupies residues 1-22 (MALQLLLAVFSCVLLLPQPAFG). 2 Plastocyanin-like domains span residues 30-146 (EIKM…PKRG) and 156-309 (KEVP…YEPP). N35 and N76 each carry an N-linked (GlcNAc...) asparagine glycan. 2 residues coordinate Cu cation: H80 and H82. A glycan (N-linked (GlcNAc...) asparagine) is linked at N112. Positions 125 and 127 each coordinate Cu cation. N-linked (GlcNAc...) asparagine glycosylation is found at N185, N201, N237, N297, N335, N383, N391, N401, N437, N444, N450, and N460. The Plastocyanin-like 3 domain maps to 427–561 (KFPWSPIVPF…RMAWLVLDGD (135 aa)). Cu cation is bound by residues H478, H481, H483, H540, C541, H542, and H546.

Belongs to the multicopper oxidase family. It depends on Cu cation as a cofactor. In terms of tissue distribution, ubiquitous with higher levels in the inflorescence stem.

It localises to the secreted. The protein resides in the extracellular space. It is found in the apoplast. It catalyses the reaction 4 hydroquinone + O2 = 4 benzosemiquinone + 2 H2O. Functionally, lignin degradation and detoxification of lignin-derived products. The chain is Laccase-17 (LAC17) from Arabidopsis thaliana (Mouse-ear cress).